The primary structure comprises 890 residues: Leucine-rich repeat receptor-like tyrosine-protein kinase PXC3 (890 aa).

Positions 1–23 (MTFWCMSILLIVGFLSKSELCEA) are cleaved as a signal peptide. The Extracellular portion of the chain corresponds to 24 to 534 (QLSDEATLVA…LRYNHRVSYR (511 aa)). Residues asparagine 46, asparagine 61, asparagine 78, and asparagine 108 are each glycosylated (N-linked (GlcNAc...) asparagine). 18 LRR repeats span residues 67 to 85 (MLDL…ISDL), 86 to 108 (RSLK…SFGN), 110 to 132 (SELE…EFGK), 133 to 157 (LRGL…LKVL), 159 to 181 (RLEE…VGNL), 182 to 205 (SSLR…LGLV), 206 to 229 (SELE…IFEK), 231 to 254 (KLKV…GICS), 256 to 276 (LSSI…TIGN), 278 to 300 (SGLT…EFSK), 301 to 325 (CSNL…LGQL), 326 to 349 (INLQ…FLGS), 350 to 373 (GNLN…LCSM), 375 to 397 (RLQY…IGNC), 399 to 421 (KLLQ…IGRM), 422 to 446 (RNLQ…LGKL), 447 to 469 (DKLV…LLKG), and 471 to 492 (MSLI…VFVP). 3 N-linked (GlcNAc...) asparagine glycosylation sites follow: asparagine 140, asparagine 171, and asparagine 180. N-linked (GlcNAc...) asparagine glycosylation is found at asparagine 276, asparagine 289, and asparagine 303. A glycan (N-linked (GlcNAc...) asparagine) is linked at asparagine 363. A glycan (N-linked (GlcNAc...) asparagine) is linked at asparagine 429. 2 N-linked (GlcNAc...) asparagine glycosylation sites follow: asparagine 477 and asparagine 498. A helical membrane pass occupies residues 535–555 (IVLAVIGSGVAVFVSVTVVVL). Residues 556-890 (LFMMREKQEK…EMLQEVKQIK (335 aa)) lie on the Cytoplasmic side of the membrane. Residues 608–886 (MKESNKLSTG…KKVVEMLQEV (279 aa)) form the Protein kinase domain. Residues 614–622 (LSTGTFSSV) and lysine 636 contribute to the ATP site. Aspartate 735 serves as the catalytic Proton acceptor.

The protein belongs to the protein kinase superfamily. Tyr protein kinase family. Expressed in the vascular strands of cotyledons, the shoot apex, hypocotyls, roots, leaves, stems and flowers.

It localises to the cell membrane. It carries out the reaction L-tyrosyl-[protein] + ATP = O-phospho-L-tyrosyl-[protein] + ADP + H(+). In terms of biological role, leucine-rich repeat receptor-like protein kinase that may play a role in vascular tissues development. The protein is Leucine-rich repeat receptor-like tyrosine-protein kinase PXC3 of Arabidopsis thaliana (Mouse-ear cress).